We begin with the raw amino-acid sequence, 271 residues long: Mannosyl-3-phosphoglycerate phosphatase (271 aa).

The Nucleophile role is filled by Asp13. Residues Asp13, Asp15, and Asp214 each contribute to the Mg(2+) site.

The protein belongs to the HAD-like hydrolase superfamily. MPGP family. It depends on Mg(2+) as a cofactor.

Its subcellular location is the cytoplasm. The catalysed reaction is 2-O-(alpha-D-mannosyl)-3-phosphoglycerate + H2O = (2R)-2-O-(alpha-D-mannosyl)-glycerate + phosphate. The polypeptide is Mannosyl-3-phosphoglycerate phosphatase (yedP) (Salmonella choleraesuis (strain SC-B67)).